The following is a 61-amino-acid chain: Metallothionein-1A (61 aa).

Methionine 1 is subject to N-acetylmethionine. The tract at residues 1 to 29 (MDPNCSCATGGSCTCTGSCKCKECKCTSC) is beta. A divalent metal cation-binding residues include cysteine 5, cysteine 7, cysteine 13, cysteine 15, cysteine 19, cysteine 21, cysteine 24, cysteine 26, cysteine 29, cysteine 33, cysteine 34, cysteine 36, cysteine 37, cysteine 41, cysteine 44, cysteine 48, cysteine 50, and cysteine 57. Residues 30 to 61 (KKSCCSCCPMSCAKCAQGCICKGASEKCSCCA) form an alpha region. Serine 58 bears the Phosphoserine mark. Positions 59 and 60 each coordinate a divalent metal cation.

This sequence belongs to the metallothionein superfamily. Type 1 family. As to quaternary structure, monomer.

Metallothioneins have a high content of cysteine residues that bind various heavy metals; these proteins are transcriptionally regulated by both heavy metals and glucocorticoids. The sequence is that of Metallothionein-1A (MT1A) from Homo sapiens (Human).